A 256-amino-acid chain; its full sequence is Triosephosphate isomerase (256 aa).

Asparagine 9–lysine 11 is a binding site for substrate. Histidine 95 acts as the Electrophile in catalysis. Glutamate 167 functions as the Proton acceptor in the catalytic mechanism. Substrate contacts are provided by residues glycine 173, serine 213, and glycine 234–glycine 235.

It belongs to the triosephosphate isomerase family. As to quaternary structure, homodimer.

It is found in the cytoplasm. The enzyme catalyses D-glyceraldehyde 3-phosphate = dihydroxyacetone phosphate. Its pathway is carbohydrate biosynthesis; gluconeogenesis. It functions in the pathway carbohydrate degradation; glycolysis; D-glyceraldehyde 3-phosphate from glycerone phosphate: step 1/1. In terms of biological role, involved in the gluconeogenesis. Catalyzes stereospecifically the conversion of dihydroxyacetone phosphate (DHAP) to D-glyceraldehyde-3-phosphate (G3P). This Symbiobacterium thermophilum (strain DSM 24528 / JCM 14929 / IAM 14863 / T) protein is Triosephosphate isomerase.